Consider the following 561-residue polypeptide: Reductase FVEG_12641 (561 aa).

Residues 1–26 (MGVQSTANLPKETVSHLDTAPTPKPG) are disordered. One can recognise an MOSC domain in the interval 52 to 189 (QQHDGPVFCS…ICKGDTISLL (138 aa)). Positions 237-342 (SAPKTYTLVD…PGSNPGAMEN (106 aa)) constitute an FAD-binding FR-type domain. FMN-binding positions include 288–289 (FE), 305–307 (GVS), 313–316 (RGGS), and threonine 362. One can recognise a 2Fe-2S ferredoxin-type domain in the interval 474–561 (FEVEVDEPDS…GIGRLRIEID (88 aa)). Cysteine 512 provides a ligand contact to [2Fe-2S] cluster. FMN is bound at residue serine 514. Residues cysteine 517, cysteine 520, and cysteine 548 each contribute to the [2Fe-2S] cluster site.

The protein belongs to the PDR/VanB family. In terms of assembly, monomer. Requires FMN as cofactor.

Reductase; part of the Fusarium detoxification of benzoxazolinone cluster 2 (FDB2) involved in the degradation of benzoxazolinones produced by the host plant. Maize, wheat, and rye produce the 2 benzoxazinone phytoanticipins 2,4-dihy-droxy-7-methoxy-1,4-benzoxazin-3-one (DIMBOA) and 2,4-dihydroxy-1,4-benzoxazin-3-one (DIBOA) that, due to their inherent instability once released, spontaneously degrade to the more stable corresponding benzoxazolinones, 6-methoxy-2-benzoxazolinone (MBOA) and 2-benzoxazolinone (BOA), respectively. The first step in the detoxification of benzoxazolinones involves the hydrolysis of the cyclic ester bond of benzoxazolinones by the FDB1 cluster gamma-lactamase MBL1 to aminophenols. MBL1 is able to convert BOA into 2-aminophenol (2-AP), as well as MBOA into 5-methoxy-2-aminophenol (2-AMP). The FDB2 cluster N-malonyltransferase FDB2/NAT1 then metabolizes aminophenols via N-malonylation to non-toxic malonamic acids. FDB2/NAT1 converts 2-AP into N-(2-hydroxyphenyl) malonamic acid (HPMA) and 2-AMP into N-(2-hydroxy-4-methoxyphenyl) malonamic acid (HMPMA). The duplicated dienlactone hydrolases DLH1 and DLH2 may provide redundant function for hydrolyzing the lactone moiety in the BOA molecule. The roles of the amidases an other enzymes encoded by the 2 FDB clusters have not been identified so far. This Gibberella moniliformis (strain M3125 / FGSC 7600) (Maize ear and stalk rot fungus) protein is Reductase FVEG_12641.